Here is a 401-residue protein sequence, read N- to C-terminus: Elongation factor Tu 2 (401 aa).

The region spanning Lys10 to Val209 is the tr-type G domain. Residues Gly19 to Thr26 form a G1 region. Residue Gly19–Thr26 participates in GTP binding. A Mg(2+)-binding site is contributed by Thr26. Positions Gly60–Ala64 are G2. The segment at Asp81–Gly84 is G3. GTP is bound by residues Asp81–His85 and Asn136–Asp139. The G4 stretch occupies residues Asn136–Asp139. Residues Ser174 to Leu176 are G5.

This sequence belongs to the TRAFAC class translation factor GTPase superfamily. Classic translation factor GTPase family. EF-Tu/EF-1A subfamily. Monomer.

It is found in the cytoplasm. It catalyses the reaction GTP + H2O = GDP + phosphate + H(+). Functionally, GTP hydrolase that promotes the GTP-dependent binding of aminoacyl-tRNA to the A-site of ribosomes during protein biosynthesis. This Roseiflexus castenholzii (strain DSM 13941 / HLO8) protein is Elongation factor Tu 2.